We begin with the raw amino-acid sequence, 847 residues long: Glucans biosynthesis glucosyltransferase H (847 aa).

At 1 to 138 (MNKTTEYIDA…KWRTVGTIRR (138 aa)) the chain is on the cytoplasmic side. The chain crosses the membrane as a helical span at residues 139–156 (YILLILTLAQTVVATWYM). Residues 157–193 (KTILPYQGWALINPMDMVGQDIWVSFMQLLPYMLQTG) lie on the Periplasmic side of the membrane. The chain crosses the membrane as a helical span at residues 194-216 (ILILFAVLFCWVSAGFWTALMGF). The Cytoplasmic segment spans residues 217 to 511 (LQLLIGRDKY…LVKGMHPVHR (295 aa)). A helical membrane pass occupies residues 512–534 (AVFLTGVMSYLSAPLWFMFLALS). Residues 535-567 (TALQVVHALTEPQYFLQPRQLFPVWPQWRPELA) lie on the Periplasmic side of the membrane. Residues 568–590 (IALFASTMVLLFLPKLLSIMLIW) traverse the membrane as a helical segment. Residues 591 to 602 (CKGTKEYGGFWR) lie on the Cytoplasmic side of the membrane. The helical transmembrane segment at 603-625 (VTLSLLLEVLFSVLLAPVRMLFH) threads the bilayer. Residues 626-679 (TVFVVSAFLGWEVVWNSPQRDDDSTPWGEAFMRHGSQLLLGLVWAVGMAWLDLR) are Periplasmic-facing. Residues 680–702 (FLFWLAPIVFSLILSPFVSVISS) traverse the membrane as a helical segment. Over 703-847 (RSTVGLRTKR…ALQGRTSSAR (145 aa)) the chain is Cytoplasmic.

The protein belongs to the glycosyltransferase 2 family. OpgH subfamily.

It is found in the cell inner membrane. Its pathway is glycan metabolism; osmoregulated periplasmic glucan (OPG) biosynthesis. In terms of biological role, involved in the biosynthesis of osmoregulated periplasmic glucans (OPGs). The polypeptide is Glucans biosynthesis glucosyltransferase H (Salmonella typhimurium (strain LT2 / SGSC1412 / ATCC 700720)).